The primary structure comprises 32 residues: Calcitonin (32 aa).

Residues C1 and C7 are joined by a disulfide bond. At P32 the chain carries Proline amide.

The protein belongs to the calcitonin family.

It is found in the secreted. Calcitonin is a peptide hormone that causes a rapid but short-lived drop in the level of calcium and phosphate in blood by promoting the incorporation of those ions in the bones. Calcitonin function is mediated by the calcitonin receptor/CALCR and the CALCR-RAMP2 (AMYR2) receptor complex. This chain is Calcitonin (CALCA), found in Bos taurus (Bovine).